We begin with the raw amino-acid sequence, 93 residues long: Small ribosomal subunit protein uS19 (93 aa).

The protein belongs to the universal ribosomal protein uS19 family.

Its function is as follows. Protein S19 forms a complex with S13 that binds strongly to the 16S ribosomal RNA. This chain is Small ribosomal subunit protein uS19, found in Leifsonia xyli subsp. xyli (strain CTCB07).